Consider the following 338-residue polypeptide: Ketol-acid reductoisomerase (NADP(+)) (338 aa).

The 181-residue stretch at 1 to 181 (MQVYYDKDCD…GGGRTGIIET (181 aa)) folds into the KARI N-terminal Rossmann domain. NADP(+) contacts are provided by residues 24–27 (FGSQ), arginine 47, serine 50, serine 52, and 82–85 (DEFQ). Histidine 107 is a catalytic residue. NADP(+) is bound at residue glycine 133. The KARI C-terminal knotted domain maps to 182–327 (TFKDETETDL…EKLRSMMPWI (146 aa)). Residues aspartate 190, glutamate 194, glutamate 226, and glutamate 230 each contribute to the Mg(2+) site. Serine 251 contacts substrate.

This sequence belongs to the ketol-acid reductoisomerase family. Mg(2+) serves as cofactor.

It carries out the reaction (2R)-2,3-dihydroxy-3-methylbutanoate + NADP(+) = (2S)-2-acetolactate + NADPH + H(+). The enzyme catalyses (2R,3R)-2,3-dihydroxy-3-methylpentanoate + NADP(+) = (S)-2-ethyl-2-hydroxy-3-oxobutanoate + NADPH + H(+). Its pathway is amino-acid biosynthesis; L-isoleucine biosynthesis; L-isoleucine from 2-oxobutanoate: step 2/4. It participates in amino-acid biosynthesis; L-valine biosynthesis; L-valine from pyruvate: step 2/4. Its function is as follows. Involved in the biosynthesis of branched-chain amino acids (BCAA). Catalyzes an alkyl-migration followed by a ketol-acid reduction of (S)-2-acetolactate (S2AL) to yield (R)-2,3-dihydroxy-isovalerate. In the isomerase reaction, S2AL is rearranged via a Mg-dependent methyl migration to produce 3-hydroxy-3-methyl-2-ketobutyrate (HMKB). In the reductase reaction, this 2-ketoacid undergoes a metal-dependent reduction by NADPH to yield (R)-2,3-dihydroxy-isovalerate. The protein is Ketol-acid reductoisomerase (NADP(+)) of Marinobacter nauticus (strain ATCC 700491 / DSM 11845 / VT8) (Marinobacter aquaeolei).